A 560-amino-acid polypeptide reads, in one-letter code: NAD-dependent malic enzyme (560 aa).

The Proton donor role is filled by Tyr-100. Arg-153 serves as a coordination point for NAD(+). Lys-171 (proton acceptor) is an active-site residue. A divalent metal cation is bound by residues Glu-242, Asp-243, and Asp-266. The NAD(+) site is built by Asp-266 and Asn-413.

It belongs to the malic enzymes family. In terms of assembly, homotetramer. The cofactor is Mg(2+). It depends on Mn(2+) as a cofactor.

The enzyme catalyses (S)-malate + NAD(+) = pyruvate + CO2 + NADH. It carries out the reaction oxaloacetate + H(+) = pyruvate + CO2. In Psychrobacter cryohalolentis (strain ATCC BAA-1226 / DSM 17306 / VKM B-2378 / K5), this protein is NAD-dependent malic enzyme.